Reading from the N-terminus, the 201-residue chain is Recombination protein RecR (201 aa).

The C4-type zinc finger occupies 60 to 75 (CKYCQSLTEKDVCDIC). The 95-residue stretch at 83–177 (SKLCIIESML…KISRIGFGVP (95 aa)) folds into the Toprim domain.

It belongs to the RecR family.

May play a role in DNA repair. It seems to be involved in an RecBC-independent recombinational process of DNA repair. It may act with RecF and RecO. In Francisella philomiragia subsp. philomiragia (strain ATCC 25017 / CCUG 19701 / FSC 153 / O#319-036), this protein is Recombination protein RecR.